Reading from the N-terminus, the 552-residue chain is T-box transcription factor TBX4 (552 aa).

Positions 1–14 (MLQDKGLSESEEAF) are enriched in basic and acidic residues. The interval 1-50 (MLQDKGLSESEEAFRAPGPALGEASNTSTTNAPEPALATPGLSGAALSSP) is disordered. A DNA-binding region (T-box) is located at residues 76–256 (LHEKELWKKF…NNPFAKGFRG (181 aa)). The residue at position 514 (serine 514) is a Phosphoserine.

The protein resides in the nucleus. Its function is as follows. Transcriptional regulator that has an essential role in the organogenesis of lungs, pelvis, and hindlimbs. The protein is T-box transcription factor TBX4 (Tbx4) of Mus musculus (Mouse).